The primary structure comprises 349 residues: Phloroglucinol synthase (349 aa).

Cys-138 is a catalytic residue.

This sequence belongs to the thiolase-like superfamily. Chalcone/stilbene synthases family.

It catalyses the reaction 3 malonyl-CoA + 3 H(+) = 1,3,5-trihydroxybenzene + 3 CO2 + 3 CoA. Its pathway is antibiotic biosynthesis. Type III polyketide synthase that catalyzes the synthesis of phloroglucinol from three molecules of malonyl-CoA. In addition to its ability to produce phloroglucinol from malonyl-CoA, it exhibits broad substrate specificity, accepting C4-C12 aliphatic acyl-CoAs and phenylacetyl-CoA as the starters to form C6-polyoxoalkylated alpha-pyrones from sequential condensation with malonyl-CoA. The protein is Phloroglucinol synthase of Pseudomonas fluorescens (strain ATCC BAA-477 / NRRL B-23932 / Pf-5).